Reading from the N-terminus, the 173-residue chain is MAEIIEKSGLRWLWLAAIMLALDQVTKYWTIQSLDLYESYEIFSFFSFTYARNYGAAFSFLGDAGGWQRYLFTAIAIVVSSYLVYLLKKNASTDRWINCAYALILSGALGNVVDRMMFGYVIDFLDFDLGFYRWPTFNIADSAIFTGAVIMIFESFFAKQAKPIKQPKGNKNV.

3 helical membrane-spanning segments follow: residues 12–32 (WLWL…WTIQ), 67–87 (WQRY…VYLL), and 102–122 (ALIL…GYVI). Residues D123 and D141 contribute to the active site. A helical membrane pass occupies residues 137-157 (FNIADSAIFTGAVIMIFESFF).

It belongs to the peptidase A8 family.

The protein resides in the cell inner membrane. The catalysed reaction is Release of signal peptides from bacterial membrane prolipoproteins. Hydrolyzes -Xaa-Yaa-Zaa-|-(S,diacylglyceryl)Cys-, in which Xaa is hydrophobic (preferably Leu), and Yaa (Ala or Ser) and Zaa (Gly or Ala) have small, neutral side chains.. It functions in the pathway protein modification; lipoprotein biosynthesis (signal peptide cleavage). This protein specifically catalyzes the removal of signal peptides from prolipoproteins. This is Lipoprotein signal peptidase from Psychromonas ingrahamii (strain DSM 17664 / CCUG 51855 / 37).